Here is a 343-residue protein sequence, read N- to C-terminus: uncharacterized protein (343 aa).

The disordered stretch occupies residues 66-89 (TQNPEPTSASTPPSASASSLPNGA). Residues 71 to 84 (PTSASTPPSASASS) show a composition bias toward low complexity. Residues 96-116 (GVIAGPIVGVLGGLIVLVIIF) form a helical membrane-spanning segment. 2 disordered regions span residues 161–191 (GGYQ…NDTR) and 252–343 (GRPL…SEHF). Residues 165-188 (MHSTPWASSPRNSTIPQRSQSFYN) are compositionally biased toward polar residues. Over residues 280–289 (SNDDSDETKL) the composition is skewed to basic and acidic residues. Over residues 290-299 (KQSSTESSSE) the composition is skewed to low complexity. Basic and acidic residues-rich tracts occupy residues 301–311 (LDEKDKFDKNS) and 322–333 (SSYEHEISEEHK). Over residues 334 to 343 (KHSKKRSEHF) the composition is skewed to basic residues.

It localises to the golgi apparatus membrane. This is an uncharacterized protein from Schizosaccharomyces pombe (strain 972 / ATCC 24843) (Fission yeast).